Here is a 320-residue protein sequence, read N- to C-terminus: Heterogeneous nuclear ribonucleoprotein A1 (320 aa).

Position 1 is an N-acetylmethionine (methionine 1). At serine 2 the chain carries N-acetylserine; in Heterogeneous nuclear ribonucleoprotein A1, N-terminally processed. A Phosphoserine modification is found at serine 2. At lysine 3 the chain carries N6-acetyllysine; alternate. Lysine 3 participates in a covalent cross-link: Glycyl lysine isopeptide (Lys-Gly) (interchain with G-Cter in SUMO2); alternate. 2 positions are modified to phosphoserine: serine 4 and serine 6. The segment at 4–94 is globular A domain; it reads SESPKEPEQL…EPKRAVSRED (91 aa). A Glycyl lysine isopeptide (Lys-Gly) (interchain with G-Cter in SUMO2) cross-link involves residue lysine 8. RRM domains are found at residues 14–97 and 105–184; these read RKLF…DSQR and KKIF…LCKQ. Phosphoserine is present on serine 22. Lysine 78 participates in a covalent cross-link: Glycyl lysine isopeptide (Lys-Gly) (interchain with G-Cter in SUMO2). The tract at residues 95–185 is globular B domain; that stretch reads SQRPGAHLTV…EVRKALCKQE (91 aa). Lysine 113 participates in a covalent cross-link: Glycyl lysine isopeptide (Lys-Gly) (interchain with G-Cter in SUMO). Glycyl lysine isopeptide (Lys-Gly) (interchain with G-Cter in SUMO2) cross-links involve residues lysine 179 and lysine 183. The segment at 188–216 is disordered; that stretch reads SASSSQRGRSGSGNFGGGRGGGFGGNDNF. A Phosphoserine; by MKNK2 modification is found at serine 192. An Asymmetric dimethylarginine; alternate modification is found at arginine 194. The residue at position 194 (arginine 194) is a Dimethylated arginine; alternate. Omega-N-methylarginine; alternate is present on arginine 194. Residues 197-216 are compositionally biased toward gly residues; that stretch reads SGSGNFGGGRGGGFGGNDNF. The residue at position 199 (serine 199) is a Phosphoserine. Asymmetric dimethylarginine; alternate is present on residues arginine 206, arginine 218, arginine 225, and arginine 232. Arginine 206 carries the dimethylated arginine; alternate modification. 4 positions are modified to omega-N-methylarginine; alternate: arginine 206, arginine 218, arginine 225, and arginine 232. The RNA-binding RGG-box stretch occupies residues 218–240; the sequence is RGGNFSGRGGFGGSRGGGGYGGS. Arginine 225 is modified (dimethylated arginine; alternate). A nuclear targeting sequence region spans residues 268 to 305; it reads NQSSNFGPMKGGNFGGRSSGPYGGGGQYFAKPRNQGGY. The segment at 271-320 is disordered; the sequence is SNFGPMKGGNFGGRSSGPYGGGGQYFAKPRNQGGYGGSSSSSSYGSGRRF. A compositionally biased stretch (gly residues) spans 276 to 294; it reads MKGGNFGGRSSGPYGGGGQ. Residue arginine 284 is modified to Omega-N-methylarginine. Serine 285 carries the phosphoserine modification. Lysine 298 bears the N6-acetyllysine; alternate mark. Lysine 298 participates in a covalent cross-link: Glycyl lysine isopeptide (Lys-Gly) (interchain with G-Cter in SUMO2); alternate. Arginine 300 carries the post-translational modification Omega-N-methylarginine. The span at 308–320 shows a compositional bias: low complexity; sequence SSSSSSYGSGRRF. Serine 309 carries the post-translational modification Phosphoserine. 3 positions are modified to phosphoserine; by MKNK2: serine 310, serine 311, and serine 312. Serine 313 and serine 316 each carry phosphoserine. Omega-N-methylarginine is present on arginine 318.

Identified in the spliceosome C complex. Identified in a IGF2BP1-dependent mRNP granule complex containing untranslated mRNAs. Interacts with SEPT6. Interacts with C9orf72. Interacts with KHDRBS1. Interacts with UBQLN2. Interacts with PPIA/CYPA. Post-translationally, sumoylated.

Its subcellular location is the nucleus. It is found in the cytoplasm. Its function is as follows. Involved in the packaging of pre-mRNA into hnRNP particles, transport of poly(A) mRNA from the nucleus to the cytoplasm and modulation of splice site selection. Plays a role in the splicing of pyruvate kinase PKM by binding repressively to sequences flanking PKM exon 9, inhibiting exon 9 inclusion and resulting in exon 10 inclusion and production of the PKM M2 isoform. Binds to the IRES and thereby inhibits the translation of the apoptosis protease activating factor APAF1. May bind to specific miRNA hairpins. The sequence is that of Heterogeneous nuclear ribonucleoprotein A1 (Hnrnpa1) from Rattus norvegicus (Rat).